The primary structure comprises 140 residues: Ribonuclease P protein component (140 aa).

The tract at residues Arg-115–Thr-140 is disordered.

It belongs to the RnpA family. In terms of assembly, consists of a catalytic RNA component (M1 or rnpB) and a protein subunit.

It carries out the reaction Endonucleolytic cleavage of RNA, removing 5'-extranucleotides from tRNA precursor.. Functionally, RNaseP catalyzes the removal of the 5'-leader sequence from pre-tRNA to produce the mature 5'-terminus. It can also cleave other RNA substrates such as 4.5S RNA. The protein component plays an auxiliary but essential role in vivo by binding to the 5'-leader sequence and broadening the substrate specificity of the ribozyme. The polypeptide is Ribonuclease P protein component (Pseudoalteromonas translucida (strain TAC 125)).